Consider the following 478-residue polypeptide: Probable cytosolic Fe-S cluster assembly factor AGAP009023 (478 aa).

Positions 23, 69, 72, 75, 189, 245, 396, and 400 each coordinate [4Fe-4S] cluster.

Belongs to the NARF family.

Functionally, component of the cytosolic iron-sulfur (Fe/S) protein assembly machinery. Required for maturation of extramitochondrial Fe/S proteins. This Anopheles gambiae (African malaria mosquito) protein is Probable cytosolic Fe-S cluster assembly factor AGAP009023.